A 521-amino-acid polypeptide reads, in one-letter code: Anaerobic nitric oxide reductase flavorubredoxin (521 aa).

A zinc metallo-hydrolase region spans residues 30–210; that stretch reads HKGTSYNSYL…PFSPLVTAKI (181 aa). Fe cation-binding residues include H79, E81, D83, H147, D166, and H227. A Flavodoxin-like domain is found at 254-393; the sequence is ITLFYDSMSN…LCREHGRQLA (140 aa). FMN is bound by residues 260–264 and 342–369; these read SMSNN and AFGS…DISI. A Rubredoxin-like domain is found at 464–515; sequence DQPMLCTVCQWIYDPALGEPDQLVAPGTPWARVPDSFLCPGCGIGKEVFEPC. Fe cation contacts are provided by C469, C472, C502, and C505.

In the N-terminal section; belongs to the zinc metallo-hydrolase group 3 family. In terms of assembly, homotetramer. The cofactor is Fe cation. It depends on FMN as a cofactor.

The protein localises to the cytoplasm. The protein operates within nitrogen metabolism; nitric oxide reduction. Its function is as follows. Anaerobic nitric oxide reductase; uses NADH to detoxify nitric oxide (NO), protecting several 4Fe-4S NO-sensitive enzymes. Has at least 2 reductase partners, only one of which (NorW, flavorubredoxin reductase) has been identified. NO probably binds to the di-iron center; electrons enter from the NorW at rubredoxin and are transferred sequentially to the FMN center and the di-iron center. Also able to function as an aerobic oxygen reductase. The chain is Anaerobic nitric oxide reductase flavorubredoxin from Aeromonas salmonicida (strain A449).